The following is a 545-amino-acid chain: Solute carrier family 22 member 6 (545 aa).

Over 1–9 the chain is Cytoplasmic; it reads MAFNDLLKQ. Residues 10-30 form a helical membrane-spanning segment; the sequence is VGGVGRFQLIQVTMVVAPLLL. At 31–129 the chain is on the extracellular side; that stretch reads MASHNTLQNF…LVCSHRAFRQ (99 aa). N-linked (GlcNAc...) asparagine glycosylation is found at asparagine 39, asparagine 56, asparagine 86, asparagine 91, and asparagine 107. The chain crosses the membrane as a helical span at residues 130–150; the sequence is LAQSLFMVGVLLGAMMFGYLA. Residues 151 to 157 lie on the Cytoplasmic side of the membrane; the sequence is DRLGRRK. A helical membrane pass occupies residues 158 to 177; sequence VLILNYLQTAVSGTCAAYAP. The N-linked (GlcNAc...) asparagine glycan is linked to asparagine 178. At 178 to 180 the chain is on the extracellular side; sequence NYT. Residues 181-201 traverse the membrane as a helical segment; the sequence is VYCIFRLLSGMSLASIAINCM. At 202–218 the chain is on the cytoplasmic side; the sequence is TLNMEWMPIHTRAYVGT. Residues 219 to 239 form a helical membrane-spanning segment; that stretch reads LIGYVYSLGQFLLAGIAYAVP. Over 240-242 the chain is Extracellular; sequence HWR. Residues 243–263 traverse the membrane as a helical segment; the sequence is HLQLAVSVPFFVAFIYSWFFI. Over 264–331 the chain is Cytoplasmic; the sequence is ESARWYSSSG…ELLRCPTLRR (68 aa). A helical membrane pass occupies residues 332–352; sequence LFLCLSMLWFATSFAYYGLVM. The Extracellular portion of the chain corresponds to 353–362; it reads DLQGFGVSMY. A helical transmembrane segment spans residues 363 to 383; it reads LIQVIFGAVDLPAKFVCFLVI. The Cytoplasmic segment spans residues 384-389; the sequence is NSMGRR. The chain crosses the membrane as a helical span at residues 390 to 410; the sequence is PAQLASLLLAGICILVNGIIP. The Extracellular segment spans residues 411 to 419; that stretch reads RGHTIIRTS. Residues 420 to 440 form a helical membrane-spanning segment; it reads LAVLGKGCLASSFNCIFLYTG. At 441 to 450 the chain is on the cytoplasmic side; it reads ELYPTMIRQT. A helical transmembrane segment spans residues 451–471; that stretch reads GLGMGSTMARVGSIVSPLISM. Residues 472–478 lie on the Extracellular side of the membrane; the sequence is TAEFYPS. The chain crosses the membrane as a helical span at residues 479–499; that stretch reads IPLFIFGAVPVAASAVTALLP. Residues 500-545 lie on the Cytoplasmic side of the membrane; that stretch reads ETLGQPLPDTVQDLKSRSRGKQKQQQLEQQKQMIPLQVSTQEKNGL. A disordered region spans residues 515–545; that stretch reads SRSRGKQKQQQLEQQKQMIPLQVSTQEKNGL. Residues 522–531 show a composition bias toward low complexity; that stretch reads KQQQLEQQKQ. The span at 536–545 shows a compositional bias: polar residues; sequence QVSTQEKNGL.

This sequence belongs to the major facilitator (TC 2.A.1) superfamily. Organic cation transporter (TC 2.A.1.19) family. Glycosylated. Glycosylation is necessary for proper targeting of the transporter to the plasma membrane. In terms of tissue distribution, expressed in kidney. In kidney, restricted to the proximal convoluted tubule (representing S1 and S2 segments). In brain, expressed in neurons of the cortex cerebri and hippocampus as well as in the ependymal cell layer of the choroid plexus.

It is found in the basolateral cell membrane. The protein resides in the basal cell membrane. The catalysed reaction is (6R)-L-erythro-5,6,7,8-tetrahydrobiopterin(out) + a dicarboxylate(in) = (6R)-L-erythro-5,6,7,8-tetrahydrobiopterin(in) + a dicarboxylate(out). The enzyme catalyses L-erythro-7,8-dihydrobiopterin(out) + a dicarboxylate(in) = L-erythro-7,8-dihydrobiopterin(in) + a dicarboxylate(out). It catalyses the reaction L-sepiapterin(out) + a dicarboxylate(in) = L-sepiapterin(in) + a dicarboxylate(out). It carries out the reaction prostaglandin F2alpha(out) + a dicarboxylate(in) = prostaglandin F2alpha(in) + a dicarboxylate(out). The catalysed reaction is prostaglandin E2(out) + a dicarboxylate(in) = prostaglandin E2(in) + a dicarboxylate(out). The enzyme catalyses 3',5'-cyclic AMP(out) + a dicarboxylate(in) = 3',5'-cyclic AMP(in) + a dicarboxylate(out). It catalyses the reaction 3',5'-cyclic GMP(out) + a dicarboxylate(in) = 3',5'-cyclic GMP(in) + a dicarboxylate(out). It carries out the reaction urate(out) + a dicarboxylate(in) = urate(in) + a dicarboxylate(out). The catalysed reaction is kynurenate(out) + glutarate(in) = kynurenate(in) + glutarate(out). The enzyme catalyses (indol-3-yl)acetate(out) + a dicarboxylate(in) = (indol-3-yl)acetate(in) + a dicarboxylate(out). It catalyses the reaction indoxyl sulfate(out) + a dicarboxylate(in) = indoxyl sulfate(in) + a dicarboxylate(out). It carries out the reaction N-benzoylglycine(out) + a dicarboxylate(in) = N-benzoylglycine(in) + a dicarboxylate(out). The catalysed reaction is 3-carboxy-4-methyl-5-propyl-2-furanpropanoate(out) + a dicarboxylate(in) = 3-carboxy-4-methyl-5-propyl-2-furanpropanoate(in) + a dicarboxylate(out). Functionally, secondary active transporter that functions as a Na(+)-independent organic anion (OA)/dicarboxylate antiporter where the uptake of one molecule of OA into the cell is coupled with an efflux of one molecule of intracellular dicarboxylate such as 2-oxoglutarate or glutarate. Mediates the uptake of OA across the basolateral side of proximal tubule epithelial cells, thereby contributing to the renal elimination of endogenous OA from the systemic circulation into the urine. Functions as a biopterin transporters involved in the uptake and the secretion of coenzymes tetrahydrobiopterin (BH4), dihydrobiopterin (BH2) and sepiapterin to urine, thereby determining baseline levels of blood biopterins. Transports prostaglandin E2 (PGE2) and prostaglandin F2-alpha (PGF2-alpha) and may contribute to their renal excretion. Involved in the transport of neuroactive tryptophan metabolites kynurenate (KYNA) and xanthurenate (XA). May transport glutamate. Also involved in the disposition of uremic toxins and potentially toxic xenobiotics by the renal organic anion secretory pathway, helping reduce their undesired toxicological effects on the body. Uremic toxins include the indoxyl sulfate (IS), hippurate/N-benzoylglycine (HA), indole acetate (IA) and 3-carboxy-4- methyl-5-propyl-2-furanpropionate(CMPF) and urate. Xenobiotics include the mycotoxin ochratoxin (OTA). May also contribute to the transport of organic compounds in testes across the blood-testis-barrier. The chain is Solute carrier family 22 member 6 from Mus musculus (Mouse).